The chain runs to 353 residues: Methylthioribose-1-phosphate isomerase (353 aa).

Residues 51 to 53, R94, and Q199 contribute to the substrate site; that span reads RGA. D240 acts as the Proton donor in catalysis. 250–251 is a binding site for substrate; it reads NK.

The protein belongs to the eIF-2B alpha/beta/delta subunits family. MtnA subfamily. In terms of assembly, homodimer.

The catalysed reaction is 5-(methylsulfanyl)-alpha-D-ribose 1-phosphate = 5-(methylsulfanyl)-D-ribulose 1-phosphate. It functions in the pathway amino-acid biosynthesis; L-methionine biosynthesis via salvage pathway; L-methionine from S-methyl-5-thio-alpha-D-ribose 1-phosphate: step 1/6. Its function is as follows. Catalyzes the interconversion of methylthioribose-1-phosphate (MTR-1-P) into methylthioribulose-1-phosphate (MTRu-1-P). This is Methylthioribose-1-phosphate isomerase from Bacillus pumilus (strain SAFR-032).